The chain runs to 101 residues: Small ribosomal subunit protein uS14 (101 aa).

It belongs to the universal ribosomal protein uS14 family. In terms of assembly, part of the 30S ribosomal subunit. Contacts proteins S3 and S10.

Functionally, binds 16S rRNA, required for the assembly of 30S particles and may also be responsible for determining the conformation of the 16S rRNA at the A site. The sequence is that of Small ribosomal subunit protein uS14 from Neisseria meningitidis serogroup C / serotype 2a (strain ATCC 700532 / DSM 15464 / FAM18).